Reading from the N-terminus, the 189-residue chain is MSTSGTGKMTRAQRRAAARRNRWTARVQPVIVEPLAAGQGKAIKAIAGYSISKWEASSDAITAKATNAMSITLPHELSSEKNKELKVGRVLLWLGLLPSVAGRIKACVAEKQAQAEAAFQVALAVADSSKEVVAAMYTDAFRGATLGDLLNLQIYLYASEAVPAKAVVVHLEVEHVRPTFDDFFTPVYR.

Positions 1–21 (MSTSGTGKMTRAQRRAAARRN) are disordered. Basic residues predominate over residues 11 to 21 (RAQRRAAARRN).

This sequence belongs to the bromovirus capsid protein family.

It localises to the virion. In terms of biological role, capsid protein. Binds specifically to the subgenomic RNA4 to ensure selective packaging. The protein is Capsid protein of Brome mosaic virus (BMV).